The following is a 360-amino-acid chain: DNA replication and repair protein RecF (360 aa).

Position 30 to 37 (30 to 37) interacts with ATP; that stretch reads GHNGSGKT.

This sequence belongs to the RecF family.

The protein localises to the cytoplasm. Functionally, the RecF protein is involved in DNA metabolism; it is required for DNA replication and normal SOS inducibility. RecF binds preferentially to single-stranded, linear DNA. It also seems to bind ATP. The polypeptide is DNA replication and repair protein RecF (Shewanella sediminis (strain HAW-EB3)).